A 225-amino-acid polypeptide reads, in one-letter code: 7-cyano-7-deazaguanine synthase (225 aa).

10-20 (FSGGQDSTTLA) serves as a coordination point for ATP. Zn(2+) contacts are provided by cysteine 190, cysteine 205, cysteine 208, and cysteine 211.

The protein belongs to the QueC family. The cofactor is Zn(2+).

The enzyme catalyses 7-carboxy-7-deazaguanine + NH4(+) + ATP = 7-cyano-7-deazaguanine + ADP + phosphate + H2O + H(+). Its pathway is purine metabolism; 7-cyano-7-deazaguanine biosynthesis. Functionally, catalyzes the ATP-dependent conversion of 7-carboxy-7-deazaguanine (CDG) to 7-cyano-7-deazaguanine (preQ(0)). The polypeptide is 7-cyano-7-deazaguanine synthase (Helicobacter acinonychis (strain Sheeba)).